The sequence spans 502 residues: ATP synthase subunit alpha, chloroplastic (502 aa).

170 to 177 serves as a coordination point for ATP; that stretch reads GDRQTGKT.

Belongs to the ATPase alpha/beta chains family. In terms of assembly, F-type ATPases have 2 components, CF(1) - the catalytic core - and CF(0) - the membrane proton channel. CF(1) has five subunits: alpha(3), beta(3), gamma(1), delta(1), epsilon(1). CF(0) has four main subunits: a, b, b' and c.

It is found in the plastid. Its subcellular location is the chloroplast thylakoid membrane. It carries out the reaction ATP + H2O + 4 H(+)(in) = ADP + phosphate + 5 H(+)(out). Functionally, produces ATP from ADP in the presence of a proton gradient across the membrane. The alpha chain is a regulatory subunit. This Rhodomonas salina (Cryptomonas salina) protein is ATP synthase subunit alpha, chloroplastic.